A 196-amino-acid chain; its full sequence is Glycerol-3-phosphate acyltransferase (196 aa).

The next 4 helical transmembrane spans lie at 3–23 (NAVFVIAAYLLGSISFGILVS), 78–98 (VGVVCWVAVAVFLGHLYPVFY), 112–132 (VLLAFSPLLAGLALLSWIVVF), and 154–174 (WLLLPQIGYIIVVFVLSLLLI).

This sequence belongs to the PlsY family. As to quaternary structure, probably interacts with PlsX.

It localises to the cell inner membrane. It catalyses the reaction an acyl phosphate + sn-glycerol 3-phosphate = a 1-acyl-sn-glycero-3-phosphate + phosphate. Its pathway is lipid metabolism; phospholipid metabolism. Its function is as follows. Catalyzes the transfer of an acyl group from acyl-phosphate (acyl-PO(4)) to glycerol-3-phosphate (G3P) to form lysophosphatidic acid (LPA). This enzyme utilizes acyl-phosphate as fatty acyl donor, but not acyl-CoA or acyl-ACP. In Methylobacillus flagellatus (strain ATCC 51484 / DSM 6875 / VKM B-1610 / KT), this protein is Glycerol-3-phosphate acyltransferase.